The following is a 492-amino-acid chain: Bifunctional purine biosynthesis protein PurH (492 aa).

Positions Met-1–Val-144 constitute an MGS-like domain.

It belongs to the PurH family.

It carries out the reaction (6R)-10-formyltetrahydrofolate + 5-amino-1-(5-phospho-beta-D-ribosyl)imidazole-4-carboxamide = 5-formamido-1-(5-phospho-D-ribosyl)imidazole-4-carboxamide + (6S)-5,6,7,8-tetrahydrofolate. The catalysed reaction is IMP + H2O = 5-formamido-1-(5-phospho-D-ribosyl)imidazole-4-carboxamide. Its pathway is purine metabolism; IMP biosynthesis via de novo pathway; 5-formamido-1-(5-phospho-D-ribosyl)imidazole-4-carboxamide from 5-amino-1-(5-phospho-D-ribosyl)imidazole-4-carboxamide (10-formyl THF route): step 1/1. The protein operates within purine metabolism; IMP biosynthesis via de novo pathway; IMP from 5-formamido-1-(5-phospho-D-ribosyl)imidazole-4-carboxamide: step 1/1. This chain is Bifunctional purine biosynthesis protein PurH, found in Staphylococcus saprophyticus subsp. saprophyticus (strain ATCC 15305 / DSM 20229 / NCIMB 8711 / NCTC 7292 / S-41).